The chain runs to 424 residues: UPF0597 protein SO_1403 (424 aa).

The protein belongs to the UPF0597 family.

The polypeptide is UPF0597 protein SO_1403 (Shewanella oneidensis (strain ATCC 700550 / JCM 31522 / CIP 106686 / LMG 19005 / NCIMB 14063 / MR-1)).